Consider the following 261-residue polypeptide: Thiazole synthase (261 aa).

K102 (schiff-base intermediate with DXP) is an active-site residue. 1-deoxy-D-xylulose 5-phosphate contacts are provided by residues G163, 189–190 (AG), and 211–212 (NT).

This sequence belongs to the ThiG family. In terms of assembly, homotetramer. Forms heterodimers with either ThiH or ThiS.

It is found in the cytoplasm. The catalysed reaction is [ThiS sulfur-carrier protein]-C-terminal-Gly-aminoethanethioate + 2-iminoacetate + 1-deoxy-D-xylulose 5-phosphate = [ThiS sulfur-carrier protein]-C-terminal Gly-Gly + 2-[(2R,5Z)-2-carboxy-4-methylthiazol-5(2H)-ylidene]ethyl phosphate + 2 H2O + H(+). The protein operates within cofactor biosynthesis; thiamine diphosphate biosynthesis. In terms of biological role, catalyzes the rearrangement of 1-deoxy-D-xylulose 5-phosphate (DXP) to produce the thiazole phosphate moiety of thiamine. Sulfur is provided by the thiocarboxylate moiety of the carrier protein ThiS. In vitro, sulfur can be provided by H(2)S. In Myxococcus xanthus (strain DK1622), this protein is Thiazole synthase.